Reading from the N-terminus, the 576-residue chain is Boron transporter 1 (576 aa).

The Cytoplasmic segment spans residues 1-84; that stretch reads MSNESTRVTV…SDWVDAFNYR (84 aa). Residues 19–48 form a disordered region; that stretch reads ECAQALERTNDELDRESSVSESRSDEESHE. Basic and acidic residues predominate over residues 26–48; the sequence is RTNDELDRESSVSESRSDEESHE. The chain crosses the membrane as a helical span at residues 85–105; sequence VIPSIVDTYFNNLLPAIAFAQ. At 106–116 the chain is on the extracellular side; that stretch reads DMFDRTDNSYG. Residues 117 to 134 form a helical membrane-spanning segment; it reads VNEVLLSSAMAGIVFGVL. Topologically, residues 135-140 are cytoplasmic; sequence GGQPLC. The helical transmembrane segment at 141-160 threads the bilayer; it reads IVGVTGPISIFNYTVYEIIK. At 161–165 the chain is on the extracellular side; sequence PLNTS. The helical transmembrane segment at 166 to 186 threads the bilayer; it reads YFGFMFWICMWSMIFHLVLAF. At 187-192 the chain is on the cytoplasmic side; sequence TNAVCL. The chain crosses the membrane as a helical span at residues 193–213; the sequence is LQYVTTFPCDIFGLFINVVYI. Residues 214-235 lie on the Extracellular side of the membrane; that stretch reads QKGIQILTRQFSAKSGEKSVQD. Residues 236-256 form a helical membrane-spanning segment; sequence GFASVVVALVMTAFGLFFKLF. The Cytoplasmic segment spans residues 257–274; the sequence is HYYPLFSHRIRTFISDYS. A helical transmembrane segment spans residues 275 to 295; sequence TALSVLFWSSFTHFGGYLHDV. Residues 296–329 are Extracellular-facing; sequence KFKKLPITKAFFPTSKVNRPQNTWLAYEPIPVKD. Residues 330–350 form a helical membrane-spanning segment; sequence VFIALPFGIFLTILFYFDHNV. At 351 to 373 the chain is on the cytoplasmic side; the sequence is SSLMAQRHQYKLKKPSSFHYDFA. A helical transmembrane segment spans residues 374-394; sequence LLGLTTCISGVLGIPAPNGLI. Over 395–438 the chain is Extracellular; the sequence is PQAPLHTETLLVRDSNQKVISCVEQRFTNTFQGLMILGTMTRPL. A helical transmembrane segment spans residues 439-459; sequence LVCLGEIPQAVLSGLFFIMGI. Over 460–495 the chain is Cytoplasmic; sequence NGLMTNSIIQRLVFLFSDPNRRDNTSPLMKVSKKSM. Residues 496–516 traverse the membrane as a helical segment; it reads LIFLSFSLTGFAGEFAITNTI. The Extracellular portion of the chain corresponds to 517–518; the sequence is AA. The chain crosses the membrane as a helical span at residues 519-539; it reads IGFPLVLLLSVLVSFSFAYIF. Over 540–576 the chain is Cytoplasmic; it reads PTEELKILDTNVAQKFTIKNLLLENIRDAKFCDKHED.

It belongs to the anion exchanger (TC 2.A.31) family.

It is found in the cell membrane. Its subcellular location is the vacuole membrane. Functionally, functions in boric acid/borate export across the plasma membrane, and thereby protects yeast cells from boron toxicity. Involved in the trafficking of proteins to the vacuole. This is Boron transporter 1 (BOR1) from Saccharomyces cerevisiae (strain ATCC 204508 / S288c) (Baker's yeast).